The primary structure comprises 1051 residues: Lateral signaling target protein 2 homolog (1051 aa).

Disordered regions lie at residues 305–440, 516–552, 566–703, and 837–968; these read PLGS…DEDL, GSNA…PSTS, HLPS…NASS, and IDLA…DGKA. Residues 319–358 are compositionally biased toward low complexity; sequence NNTSSSTSNNNNNNNNNSSSSSSSSSGSGSNTAKTSTSST. Residues 360 to 370 are compositionally biased toward basic and acidic residues; it reads KAVERLVDHRN. The segment covering 371 to 391 has biased composition (polar residues); it reads NNSSTVAGATQPSTARSPSML. Low complexity-rich tracts occupy residues 392–401 and 409–428; these read SLSAGSTPTA and PSHS…NPPA. Residues 518 to 528 are compositionally biased toward polar residues; sequence NAATERQQQQQ. Composition is skewed to low complexity over residues 533 to 549 and 568 to 582; these read LQPG…QDEP and PSSS…SSNQ. A phosphoserine mark is found at Ser-569 and Ser-570. Residues 583 to 596 show a composition bias toward polar residues; that stretch reads QTTIKTPNGNQSMP. The segment covering 597-606 has biased composition (low complexity); that stretch reads NSSSSSSNHN. 2 stretches are compositionally biased toward basic residues: residues 607 to 637 and 650 to 672; these read NNRH…HPHH and HHHH…ARKR. Over residues 692-703 the composition is skewed to polar residues; that stretch reads TPGSADTSNASS. Over residues 840 to 852 the composition is skewed to low complexity; it reads ASGNNNGNSNAAA. Ser-861 is subject to Phosphoserine. 2 stretches are compositionally biased toward low complexity: residues 879–924 and 937–960; these read QQQQ…SPIS and SSIG…MSPP. An FYVE-type zinc finger spans residues 965-1025; the sequence is DGKAPRCMSC…VCRECYVREV (61 aa). Zn(2+) is bound by residues Cys-971, Cys-974, Cys-987, Cys-990, Cys-995, Cys-998, Cys-1017, and Cys-1020. The segment at 1028–1051 is disordered; it reads SRQAPAQPSQAHGQASRPQAASAS.

This sequence belongs to the lst-2 family.

Functionally, negative regulator of epidermal growth factor receptor (EGFR) signaling. This Drosophila mojavensis (Fruit fly) protein is Lateral signaling target protein 2 homolog.